Consider the following 329-residue polypeptide: MTYLAETVTLNNGEKMPLVGLGCWKMPNDVCADQIYEAIKIGYRLFDGAQDYANEKEVGQGVNRAIKEGLVKREDLVVVSKLWNSFHHPDNVPRALERTLSDLQLDYVDIFYIHFPLAFKPVPFDEKYPPGFYTGKEDEAKGHIEEEQVPLLDTWRALEKLVDQGKIKSLGISNFSGALIQDLLRGARIKPVALQIEHHPYLTQERLIKYVKNAGIQVVAYSSFGPVSFLELENKKALNTPTLFEHDTIKSIASKHKVTPQQVLLRWATQNGIAIIPKSSKKERLLDNLRINDALTLTDDELKQISGLNQNIRFNDPWEWLDNEFPTFI.

Y52 functions as the Proton donor in the catalytic mechanism. H114 contributes to the substrate binding site. Residues 173 to 174 (SN), 222 to 231 (SSFGPVSFLE), and 278 to 288 (KSSKKERLLDN) each bind NAD(+).

The protein belongs to the aldo/keto reductase family.

It carries out the reaction xylitol + NAD(+) = D-xylose + NADH + H(+). The enzyme catalyses xylitol + NADP(+) = D-xylose + NADPH + H(+). Its pathway is carbohydrate metabolism; D-xylose degradation. In terms of biological role, reduces D-xylose into xylitol. The sequence is that of NAD(P)H-dependent D-xylose reductase (XYL1) from Kluyveromyces lactis (strain ATCC 8585 / CBS 2359 / DSM 70799 / NBRC 1267 / NRRL Y-1140 / WM37) (Yeast).